The chain runs to 77 residues: Acyl carrier protein (77 aa).

One can recognise a Carrier domain in the interval 1 to 76; that stretch reads MSLEDDVKAI…DVIKYIQERQ (76 aa). Position 36 is an O-(pantetheine 4'-phosphoryl)serine (serine 36).

The protein belongs to the acyl carrier protein (ACP) family. In terms of processing, 4'-phosphopantetheine is transferred from CoA to a specific serine of apo-ACP by AcpS. This modification is essential for activity because fatty acids are bound in thioester linkage to the sulfhydryl of the prosthetic group.

Its subcellular location is the cytoplasm. The protein operates within lipid metabolism; fatty acid biosynthesis. Carrier of the growing fatty acid chain in fatty acid biosynthesis. The polypeptide is Acyl carrier protein (Chlamydia trachomatis serovar A (strain ATCC VR-571B / DSM 19440 / HAR-13)).